The primary structure comprises 78 residues: MICOS complex subunit MIC10 (78 aa).

At Ser-2 the chain carries N-acetylserine. Residues 17 to 36 form a helical membrane-spanning segment; sequence AVVKIGTGFGLGIVFSLTFF. Residues 37-78 lie on the Mitochondrial intermembrane side of the membrane; it reads KRRMWPLAFGSGMGLGMAYSNCQHDFQAPYLLHGKYVKEQEQ.

Belongs to the MICOS complex subunit Mic10 family. In terms of assembly, component of the mitochondrial contact site and cristae organizing system (MICOS) complex, composed of at least MICOS10/MIC10, CHCHD3/MIC19, CHCHD6/MIC25, APOOL/MIC27, IMMT/MIC60, APOO/MIC23/MIC26 and MICOS13/MIC13. This complex was also known under the names MINOS or MitOS complex. The MICOS complex associates with mitochondrial outer membrane proteins SAMM50, MTX1 and MTX2 (together described as components of the mitochondrial outer membrane sorting assembly machinery (SAM) complex) and DNAJC11, mitochondrial inner membrane protein TMEM11 and with HSPA9. The MICOS and SAM complexes together with DNAJC11 are part of a large protein complex spanning both membranes termed the mitochondrial intermembrane space bridging (MIB) complex. Interacts with IMMT/MIC60 and MICOS13/MIC13. Interacts with APOO/MIC23/MIC26 and APOOL/MIC27. Interacts with ARMC1.

The protein resides in the mitochondrion inner membrane. In terms of biological role, component of the MICOS complex, a large protein complex of the mitochondrial inner membrane that plays crucial roles in the maintenance of crista junctions, inner membrane architecture, and formation of contact sites to the outer membrane. The chain is MICOS complex subunit MIC10 from Homo sapiens (Human).